The following is a 350-amino-acid chain: Fe(3+) ions import ATP-binding protein FbpC (350 aa).

The 233-residue stretch at L4 to L236 folds into the ABC transporter domain. G36–T43 provides a ligand contact to ATP.

This sequence belongs to the ABC transporter superfamily. Fe(3+) ion importer (TC 3.A.1.10) family. The complex is composed of two ATP-binding proteins (FbpC), two transmembrane proteins (FbpB) and a solute-binding protein (FbpA).

The protein localises to the cell inner membrane. It carries out the reaction Fe(3+)(out) + ATP + H2O = Fe(3+)(in) + ADP + phosphate + H(+). Functionally, part of the ABC transporter complex FbpABC involved in Fe(3+) ions import. Responsible for energy coupling to the transport system. In Pseudomonas fluorescens (strain Pf0-1), this protein is Fe(3+) ions import ATP-binding protein FbpC.